The sequence spans 442 residues: Putative major teichoic acid biosynthesis protein C (442 aa).

Its function is as follows. Unknown. Might be involved in poly(glycerol phosphate) teichoic acid biosynthesis. The protein is Putative major teichoic acid biosynthesis protein C (tagC) of Bacillus subtilis (strain 168).